A 244-amino-acid chain; its full sequence is Probable transcriptional regulatory protein XfasM23_0940 (244 aa).

This sequence belongs to the TACO1 family.

Its subcellular location is the cytoplasm. In Xylella fastidiosa (strain M23), this protein is Probable transcriptional regulatory protein XfasM23_0940.